The following is a 205-amino-acid chain: Holliday junction branch migration complex subunit RuvA (205 aa).

Residues 1 to 64 (MIGRLRGLLV…EDAQLLYGFI (64 aa)) form a domain I region. Residues 65 to 143 (TKQERALFRL…SLMEASAGSE (79 aa)) form a domain II region. Residues 144–156 (REFMLKSNYTPAP) are flexible linker. The tract at residues 157–205 (VINTAEEDAIAALLSLGYKPAQASKAVSAVYQDGMDSETLIKSSLKSML) is domain III.

Belongs to the RuvA family. In terms of assembly, homotetramer. Forms an RuvA(8)-RuvB(12)-Holliday junction (HJ) complex. HJ DNA is sandwiched between 2 RuvA tetramers; dsDNA enters through RuvA and exits via RuvB. An RuvB hexamer assembles on each DNA strand where it exits the tetramer. Each RuvB hexamer is contacted by two RuvA subunits (via domain III) on 2 adjacent RuvB subunits; this complex drives branch migration. In the full resolvosome a probable DNA-RuvA(4)-RuvB(12)-RuvC(2) complex forms which resolves the HJ.

It localises to the cytoplasm. Functionally, the RuvA-RuvB-RuvC complex processes Holliday junction (HJ) DNA during genetic recombination and DNA repair, while the RuvA-RuvB complex plays an important role in the rescue of blocked DNA replication forks via replication fork reversal (RFR). RuvA specifically binds to HJ cruciform DNA, conferring on it an open structure. The RuvB hexamer acts as an ATP-dependent pump, pulling dsDNA into and through the RuvAB complex. HJ branch migration allows RuvC to scan DNA until it finds its consensus sequence, where it cleaves and resolves the cruciform DNA. The protein is Holliday junction branch migration complex subunit RuvA of Shewanella sediminis (strain HAW-EB3).